We begin with the raw amino-acid sequence, 445 residues long: uncharacterized protein (445 aa).

8 helical membrane-spanning segments follow: residues 16–36 (IVSLGVTASSFLFINGVAFLI), 52–72 (LLASMPSWGLVVTMFAWGYLL), 98–118 (VHSLLWIGVFLFLGGMAAGGC), 168–188 (GLMFPAVVCTLAAVASVLGIV), 219–239 (ASALLMMPQTVTVTFMLVWLI), 243–263 (GWSVAQAGVLVTISQLLGALG), 283–303 (LIAAAAAATLFLLAAVDNEGS), and 366–386 (AAYPTAWALCGVFPLAAVPLV). A disordered region spans residues 417–445 (AWPNGPRRPGPPGQPRRVRQGGTAITPPT).

The protein belongs to the major facilitator superfamily.

The protein resides in the cell membrane. This is an uncharacterized protein from Mycobacterium tuberculosis (strain CDC 1551 / Oshkosh).